Consider the following 127-residue polypeptide: MORF4 family-associated protein 1 (127 aa).

Residues 92–126 are a coiled coil; sequence RAAKRCEKAEEKAKEIAKMAEMLVELVRRIEKSES.

This sequence belongs to the MORF4 family-associated protein family. Found in a complex composed of MORF4L1, MRFAP1 and RB1. Interacts via its N-terminus with MORF4L1. Interacts with CSTB and MORF4L2.

Its subcellular location is the nucleus. The protein localises to the cytoplasm. It localises to the perinuclear region. This chain is MORF4 family-associated protein 1, found in Homo sapiens (Human).